The primary structure comprises 572 residues: Na(+)/citrate cotransporter (572 aa).

8 helical membrane passes run serine 13 to aspartate 33, valine 53 to leucine 73, valine 80 to valine 100, leucine 124 to threonine 144, alanine 218 to glycine 238, serine 255 to leucine 275, proline 315 to phenylalanine 335, and histidine 357 to glutamine 377. Asparagine 382 carries an N-linked (GlcNAc...) asparagine glycan. 4 helical membrane passes run valine 410–threonine 430, proline 443–threonine 463, proline 491–alanine 511, and threonine 532–glycine 552. A glycan (N-linked (GlcNAc...) asparagine) is linked at asparagine 566.

It belongs to the SLC13A/DASS transporter (TC 2.A.47) family. NADC subfamily. In terms of assembly, homodimer. As to expression, expressed in liver, testis and brain.

The protein localises to the cell membrane. It carries out the reaction citrate(out) + 4 Na(+)(out) = citrate(in) + 4 Na(+)(in). Inhibited by Li(+). Functionally, high-affinity sodium/citrate cotransporter that mediates citrate entry into cells, which is a critical participant of biochemical pathways. May function in various metabolic processes in which citrate has a critical role such as energy production (Krebs cycle), fatty acid synthesis, cholesterol synthesis, glycolysis, and gluconeogenesis. Transports citrate into the cell in a Na(+)-dependent manner, recognizing the trivalent form of citrate (physiological pH) rather than the divalent form. Can recognize succinate as a substrate, but its affinity for succinate is several fold lower than for citrate. The stoichiometry is probably 4 Na(+) for each carboxylate, irrespective of whether the translocated substrate is divalent or trivalent, rendering the process electrogenic. Involved in the regulation of citrate levels in the brain. The protein is Na(+)/citrate cotransporter (Slc13a5) of Rattus norvegicus (Rat).